A 235-amino-acid chain; its full sequence is Elongation factor Tu (235 aa).

The tr-type G domain occupies 1–125; that stretch reads KNMITGAAQM…EVDEYIPTPE (125 aa). Residue 47 to 50 coordinates GTP; sequence NKED.

Belongs to the TRAFAC class translation factor GTPase superfamily. Classic translation factor GTPase family. EF-Tu/EF-1A subfamily. As to quaternary structure, monomer.

The protein localises to the cytoplasm. The catalysed reaction is GTP + H2O = GDP + phosphate + H(+). Its function is as follows. GTP hydrolase that promotes the GTP-dependent binding of aminoacyl-tRNA to the A-site of ribosomes during protein biosynthesis. The chain is Elongation factor Tu (tufA) from Gloeothece membranacea (strain PCC 6501 / SAG 26.84).